The following is a 138-amino-acid chain: Small ribosomal subunit protein bS6 (138 aa).

The segment at 94–138 (VKQDGPLPTPKPTSKENEPEKEEVKPTEEKTESPSKDEKKEDSKE) is disordered. Positions 106–138 (TSKENEPEKEEVKPTEEKTESPSKDEKKEDSKE) are enriched in basic and acidic residues.

This sequence belongs to the bacterial ribosomal protein bS6 family.

Its function is as follows. Binds together with bS18 to 16S ribosomal RNA. This is Small ribosomal subunit protein bS6 from Prochlorococcus marinus (strain NATL2A).